We begin with the raw amino-acid sequence, 252 residues long: Small ribosomal subunit protein uS3 (252 aa).

In terms of domain architecture, KH type-2 spans 39-111 (IRKLINNFAK…DVNLNVLEVK (73 aa)). The disordered stretch occupies residues 226-252 (SQSSNNPNRRPRNFKGGNNNHVNAKKN).

The protein belongs to the universal ribosomal protein uS3 family. In terms of assembly, part of the 30S ribosomal subunit. Forms a tight complex with proteins S10 and S14.

Functionally, binds the lower part of the 30S subunit head. Binds mRNA in the 70S ribosome, positioning it for translation. The chain is Small ribosomal subunit protein uS3 from Aster yellows witches'-broom phytoplasma (strain AYWB).